The chain runs to 579 residues: Nif-specific regulatory protein (579 aa).

The region spanning 40 to 187 (DPVAEVPQIF…MVASLLEQAL (148 aa)) is the GAF domain. The Sigma-54 factor interaction domain maps to 226 to 454 (IVGSSPAIAE…LENCVNRAAA (229 aa)). Residues 254 to 261 (GESGTGKE) and 317 to 326 (ADGGTLFLDE) each bind ATP. Residues 464-536 (EELACRQGAC…PLRTKTAQLS (73 aa)) are inter-domain linker. Residues C468 and C473 each coordinate a divalent metal cation. Residues 502 to 529 (RVSAPPPEPAPAPEPAPEAPPREEVPLR) are disordered. 7 consecutive repeat copies span residues 505-506 (AP), 507-508 (PP), 509-510 (EP), 511-512 (AP), 513-514 (AP), 515-516 (EP), and 517-518 (AP). Residues 505-518 (APPPEPAPAPEPAP) are 7 X 2 AA tandem repeats of X-P. A compositionally biased stretch (pro residues) spans 505–520 (APPPEPAPAPEPAPEA). The segment at 537–579 (REELLRALESAGWVQAKAARLLGMTPRQIAYALQKFEIELRKI) is C-terminal DNA-binding domain. The segment at residues 551–570 (QAKAARLLGMTPRQIAYALQ) is a DNA-binding region (H-T-H motif).

Interacts with sigma-54.

In terms of biological role, required for activation of most nif operons, which are directly involved in nitrogen fixation. The chain is Nif-specific regulatory protein (nifA1) from Rhodobacter capsulatus (strain ATCC BAA-309 / NBRC 16581 / SB1003).